Here is a 126-residue protein sequence, read N- to C-terminus: Small ribosomal subunit protein uS11 (126 aa).

Belongs to the universal ribosomal protein uS11 family. As to quaternary structure, part of the 30S ribosomal subunit.

Located on the platform of the 30S subunit. In Methanosarcina barkeri (strain Fusaro / DSM 804), this protein is Small ribosomal subunit protein uS11.